We begin with the raw amino-acid sequence, 434 residues long: Cysteine proteinase 6 (434 aa).

An N-terminal signal peptide occupies residues 1–19; the sequence is MKVLSALCVLLVSVATAKQ. Residues 20 to 113 constitute a propeptide, activation peptide; it reads QLSELQYRNA…SEKVFGGVQA (94 aa). Disulfide bonds link Cys-133/Cys-178 and Cys-169/Cys-211. Cys-136 is an active-site residue. Asn-227 is a glycosylation site (N-linked (GlcNAc...) asparagine). A disulfide bond links Cys-269 and Cys-416. Residue His-276 is part of the active site. The interval 285–384 is disordered; the sequence is SGSSGSQSQS…GGNSNSGDYP (100 aa). Residues 288-347 are compositionally biased toward low complexity; it reads SGSQSQSAGSQSQSSNNNWSESSQSQDSNSWSQSSQSQSSQDSNSWSQSSQSQGSNSFTG. Residue Asn-305 is glycosylated (N-linked (GlcNAc...) asparagine). The span at 348–358 shows a compositional bias: gly residues; it reads AGTGSGSGSVS. Low complexity predominate over residues 359 to 381; the sequence is GSGSASGSSSFSGSSNGGNSNSG. The active site involves Asn-394.

This sequence belongs to the peptidase C1 family.

Its subcellular location is the lysosome. In Dictyostelium discoideum (Social amoeba), this protein is Cysteine proteinase 6 (cprF).